A 317-amino-acid polypeptide reads, in one-letter code: Acetyl-coenzyme A carboxylase carboxyl transferase subunit alpha (317 aa).

Residues 40-293 (LEVRVREAIL…GDVIANALAE (254 aa)) form the CoA carboxyltransferase C-terminal domain.

This sequence belongs to the AccA family. Acetyl-CoA carboxylase is a heterohexamer composed of biotin carboxyl carrier protein (AccB), biotin carboxylase (AccC) and two subunits each of ACCase subunit alpha (AccA) and ACCase subunit beta (AccD).

The protein resides in the cytoplasm. It carries out the reaction N(6)-carboxybiotinyl-L-lysyl-[protein] + acetyl-CoA = N(6)-biotinyl-L-lysyl-[protein] + malonyl-CoA. The protein operates within lipid metabolism; malonyl-CoA biosynthesis; malonyl-CoA from acetyl-CoA: step 1/1. Component of the acetyl coenzyme A carboxylase (ACC) complex. First, biotin carboxylase catalyzes the carboxylation of biotin on its carrier protein (BCCP) and then the CO(2) group is transferred by the carboxyltransferase to acetyl-CoA to form malonyl-CoA. This Rhizobium etli (strain CIAT 652) protein is Acetyl-coenzyme A carboxylase carboxyl transferase subunit alpha.